The chain runs to 295 residues: Protein PAR32 (295 aa).

N-acetylalanine is present on Ala2. Residues Ser36, Ser39, Ser47, Ser123, Ser138, Ser141, and Ser147 each carry the phosphoserine modification. Over residues 134–153 (SATRSHQSLHATTSSPNNNA) the composition is skewed to polar residues. Disordered regions lie at residues 134-156 (SATR…APIV) and 217-295 (TSKK…TMFN). The segment covering 217-227 (TSKKPKNKLKG) has biased composition (basic residues). Ser246 is modified (phosphoserine). Over residues 246-256 (SPKSSRNTINH) the composition is skewed to polar residues. Positions 265-274 (KFNLKDDNGK) are enriched in basic and acidic residues. The segment covering 275–284 (EKKKKKKKKS) has biased composition (basic residues). Positions 285 to 295 (GFFSSLKTMFN) are enriched in low complexity.

In terms of processing, hyperphosphorylated after treatment with rapamycin in a TAP42-dependent manner.

It is found in the cytoplasm. Involved in resistance to cisplatin. This chain is Protein PAR32 (PAR32), found in Saccharomyces cerevisiae (strain ATCC 204508 / S288c) (Baker's yeast).